The following is a 169-amino-acid chain: S-ribosylhomocysteine lyase (169 aa).

Fe cation is bound by residues histidine 54, histidine 58, and cysteine 128.

It belongs to the LuxS family. As to quaternary structure, homodimer. It depends on Fe cation as a cofactor.

The enzyme catalyses S-(5-deoxy-D-ribos-5-yl)-L-homocysteine = (S)-4,5-dihydroxypentane-2,3-dione + L-homocysteine. Involved in the synthesis of autoinducer 2 (AI-2) which is secreted by bacteria and is used to communicate both the cell density and the metabolic potential of the environment. The regulation of gene expression in response to changes in cell density is called quorum sensing. Catalyzes the transformation of S-ribosylhomocysteine (RHC) to homocysteine (HC) and 4,5-dihydroxy-2,3-pentadione (DPD). This is S-ribosylhomocysteine lyase from Sulfurovum sp. (strain NBC37-1).